A 664-amino-acid chain; its full sequence is DNA ligase (664 aa).

NAD(+) contacts are provided by residues 34-38 (DAEYD), 83-84 (SL), and Glu-114. Lys-116 acts as the N6-AMP-lysine intermediate in catalysis. NAD(+) is bound by residues Arg-137, Glu-172, Lys-288, and Lys-312. Cys-406, Cys-409, Cys-424, and Cys-429 together coordinate Zn(2+). Positions 586 to 664 (VRDNRLEGLT…EEEFRQMVMS (79 aa)) constitute a BRCT domain.

This sequence belongs to the NAD-dependent DNA ligase family. LigA subfamily. The cofactor is Mg(2+). It depends on Mn(2+) as a cofactor.

It catalyses the reaction NAD(+) + (deoxyribonucleotide)n-3'-hydroxyl + 5'-phospho-(deoxyribonucleotide)m = (deoxyribonucleotide)n+m + AMP + beta-nicotinamide D-nucleotide.. Functionally, DNA ligase that catalyzes the formation of phosphodiester linkages between 5'-phosphoryl and 3'-hydroxyl groups in double-stranded DNA using NAD as a coenzyme and as the energy source for the reaction. It is essential for DNA replication and repair of damaged DNA. The sequence is that of DNA ligase from Carboxydothermus hydrogenoformans (strain ATCC BAA-161 / DSM 6008 / Z-2901).